Here is a 221-residue protein sequence, read N- to C-terminus: MAATEQNLRSTLKVGLEALQLQLSEQQINQLLAYQAMIAKWTQVYNLTSVRDPAEMMTHHLLDSLAAVPALQRYLHRSGLEQGSRLLDVGSGAGLPGVVIAICCPQVAVTCVDTVAKKAAFIKQAALALRLPNLTGLHARVESITESFDVICSRAFASLADFTKWSAGALAPQGVWMAMKGKHPADELLALPENIAMFHVEQLKVPGLDAERCILWLRPVS.

S-adenosyl-L-methionine is bound by residues glycine 90, leucine 95, 141 to 142, and arginine 154; that span reads VE.

Belongs to the methyltransferase superfamily. RNA methyltransferase RsmG family.

The protein resides in the cytoplasm. The enzyme catalyses guanosine(527) in 16S rRNA + S-adenosyl-L-methionine = N(7)-methylguanosine(527) in 16S rRNA + S-adenosyl-L-homocysteine. Functionally, specifically methylates the N7 position of guanine in position 527 of 16S rRNA. The chain is Ribosomal RNA small subunit methyltransferase G from Polaromonas naphthalenivorans (strain CJ2).